The following is an 877-amino-acid chain: DNA polymerase I (877 aa).

One can recognise a 5'-3' exonuclease domain in the interval 1-310; it reads MKKKLVLIDG…FTLADRVTEE (310 aa). Residues 311 to 465 form the 3'-5' exonuclease domain; that stretch reads MLADKAALVV…ALERPFLDEL (155 aa). Residues 469–877 form a polymerase region; that stretch reads EQDRLLVELE…HYGSTWYDAK (409 aa).

Belongs to the DNA polymerase type-A family. As to quaternary structure, single-chain monomer with multiple functions.

It catalyses the reaction DNA(n) + a 2'-deoxyribonucleoside 5'-triphosphate = DNA(n+1) + diphosphate. In addition to polymerase activity, this DNA polymerase exhibits 3'-5' and 5'-3' exonuclease activity. This is DNA polymerase I (polA) from Bacillus caldotenax.